The following is a 783-amino-acid chain: Spindle pole body protein ppc89 (783 aa).

Residue serine 157 is modified to Phosphoserine. 4 disordered regions span residues phenylalanine 180 to serine 216, lysine 434 to alanine 458, glutamate 471 to glycine 504, and leucine 528 to asparagine 610. Composition is skewed to polar residues over residues arginine 201–serine 216, asparagine 437–leucine 453, and serine 474–glycine 504. Residues proline 536–threonine 551 are compositionally biased toward basic residues. The segment covering glutamate 566–phenylalanine 590 has biased composition (acidic residues).

The protein resides in the cytoplasm. Its subcellular location is the cytoskeleton. It localises to the microtubule organizing center. The protein localises to the spindle pole body. Has a role in meiosis. The chain is Spindle pole body protein ppc89 (ppc89) from Schizosaccharomyces pombe (strain 972 / ATCC 24843) (Fission yeast).